Reading from the N-terminus, the 361-residue chain is uncharacterized protein (361 aa).

This is an uncharacterized protein from Schizosaccharomyces pombe (strain 972 / ATCC 24843) (Fission yeast).